Consider the following 127-residue polypeptide: MORF4 family-associated protein 1-like 1 (127 aa).

Residues 87–118 (GEADERVSELCEKAEEKAKEIAKMAEMLVELV) are a coiled coil.

The protein belongs to the MORF4 family-associated protein family.

The protein is MORF4 family-associated protein 1-like 1 (MRFAP1L1) of Homo sapiens (Human).